We begin with the raw amino-acid sequence, 523 residues long: Sodium-dependent lysophosphatidylcholine symporter 1-B (523 aa).

Residues 1–34 lie on the Cytoplasmic side of the membrane; it reads MAKGEGAEQYTNTSLLQKPSPDEVKLAKHETKSR. A helical membrane pass occupies residues 35–64; it reads LSVCSKLCYAIGGAPYQITGCAIGFFLQIY. The Extracellular portion of the chain corresponds to 65-75; the sequence is LLDVALLDPFY. A helical transmembrane segment spans residues 76 to 96; sequence ASIILFVGRAWDAVTDPTVGF. Residues 97 to 108 are Cytoplasmic-facing; sequence LVSRTPWTRFGR. Residues 109–128 traverse the membrane as a helical segment; the sequence is MMPWIVLSTPFAVLCYFLIW. Over 129-138 the chain is Extracellular; sequence YVPSVDQGKV. A helical transmembrane segment spans residues 139-163; sequence VWYLIFYCCFQTLQTCFHVPYSALT. Residues 164–170 are Cytoplasmic-facing; the sequence is MFISTEQ. Residues 171 to 202 traverse the membrane as a helical segment; that stretch reads KERDSATAYRMTVEVLGTLIGTAIQGQIVGMA. Residues 203–226 are Extracellular-facing; the sequence is NAPCISTEIDLNSTGLEVAPDVNI. Cysteine 206 and cysteine 457 are joined by a disulfide. Asparagine 214 and asparagine 225 each carry an N-linked (GlcNAc...) asparagine glycan. Residues 227-260 traverse the membrane as a helical segment; it reads TDPHVSLQDLRNAYMIASGVICAIYVVCAVVLFL. Topologically, residues 261–290 are cytoplasmic; that stretch reads GVKEQKDTCRVRTEPMSFFQGICMVMGHGP. The helical transmembrane segment at 291–317 threads the bilayer; the sequence is YAKLVMGFLFTSLAFMLLEGNFALFCI. Over 318–328 the chain is Extracellular; it reads YNLGFRNDFQN. Residues 329-347 form a helical membrane-spanning segment; the sequence is VLLVIMLSATLAIPFWQWF. At 348–351 the chain is on the cytoplasmic side; that stretch reads LTKF. A helical membrane pass occupies residues 352-373; it reads GKKTAVYIGTTSVVPFLISVVL. Residues 374–376 lie on the Extracellular side of the membrane; that stretch reads VPS. Residues 377-413 traverse the membrane as a helical segment; sequence SLAVTYIASFAAGVSVAAAFLLPWSMLPDVVDDFKVQ. Residues 414–423 are Cytoplasmic-facing; that stretch reads NPESQGHEAI. A helical transmembrane segment spans residues 424–450; sequence FYSFYVFFTKFASGVSLGVSTLSLDFA. The Extracellular segment spans residues 451-462; that stretch reads GYVTRGCTQPGE. A helical transmembrane segment spans residues 463-486; that stretch reads VKLTLKILVSAAPIVLIIIGLLIF. The Cytoplasmic portion of the chain corresponds to 487 to 523; the sequence is ISYPINEEKRQGNRKLLNEQRENEMDSETDSTELNVV. The segment at 504 to 523 is disordered; sequence NEQRENEMDSETDSTELNVV.

This sequence belongs to the major facilitator superfamily. Expressed in the developing nervous system.

The protein localises to the cell membrane. The protein resides in the endoplasmic reticulum membrane. The catalysed reaction is a 1-acyl-sn-glycero-3-phosphocholine(in) + Na(+)(in) = a 1-acyl-sn-glycero-3-phosphocholine(out) + Na(+)(out). The enzyme catalyses 1-(4Z,7Z,10Z,13Z,16Z,19Z-docosahexaenoyl)-sn-glycero-3-phosphocholine(in) + Na(+)(in) = 1-(4Z,7Z,10Z,13Z,16Z,19Z-docosahexaenoyl)-sn-glycero-3-phosphocholine(out) + Na(+)(out). It catalyses the reaction 1-(9Z-octadecenoyl)-sn-glycero-3-phosphocholine(in) + Na(+)(in) = 1-(9Z-octadecenoyl)-sn-glycero-3-phosphocholine(out) + Na(+)(out). It carries out the reaction 1-hexadecanoyl-sn-glycero-3-phosphocholine(in) + Na(+)(in) = 1-hexadecanoyl-sn-glycero-3-phosphocholine(out) + Na(+)(out). The catalysed reaction is a 1-acyl-sn-glycero-3-phosphoethanolamine(in) + Na(+)(in) = a 1-acyl-sn-glycero-3-phosphoethanolamine(out) + Na(+)(out). Functionally, sodium-dependent lysophosphatidylcholine (LPC) symporter, which plays an essential role for blood-brain barrier formation and function. Specifically expressed in endothelium of the blood-brain barrier of micro-vessels and transports LPC into the brain. Transport of LPC is essential because it constitutes the major mechanism by which docosahexaenoic acid (DHA), an omega-3 fatty acid that is essential for normal brain growth and cognitive function, enters the brain. Transports LPC carrying long-chain fatty acids such LPC oleate and LPC palmitate with a minimum acyl chain length of 14 carbons. Does not transport docosahexaenoic acid in unesterified fatty acid. In Danio rerio (Zebrafish), this protein is Sodium-dependent lysophosphatidylcholine symporter 1-B (mfsd2ab).